The sequence spans 145 residues: AN1-type zinc finger protein 2A (145 aa).

2 consecutive AN1-type zinc fingers follow at residues Pro-4 to Val-52 and Lys-94 to Ile-142. Zn(2+)-binding residues include Cys-10, Cys-15, Cys-25, Cys-28, Cys-33, His-36, His-42, Cys-44, Cys-100, Cys-105, Cys-115, Cys-118, Cys-123, His-126, His-132, and Cys-134.

The protein localises to the cytoplasm. The protein resides in the nucleus. The chain is AN1-type zinc finger protein 2A (ZFAND2A) from Homo sapiens (Human).